Consider the following 190-residue polypeptide: 6,7-dimethyl-8-ribityllumazine synthase (190 aa).

5-amino-6-(D-ribitylamino)uracil is bound by residues phenylalanine 23, 61–63, and 85–87; these read SFE and AVI. Position 90–91 (90–91) interacts with (2S)-2-hydroxy-3-oxobutyl phosphate; it reads QT. Residue histidine 93 is the Proton donor of the active site. Position 118 (phenylalanine 118) interacts with 5-amino-6-(D-ribitylamino)uracil. Arginine 132 serves as a coordination point for (2S)-2-hydroxy-3-oxobutyl phosphate.

It belongs to the DMRL synthase family.

It carries out the reaction (2S)-2-hydroxy-3-oxobutyl phosphate + 5-amino-6-(D-ribitylamino)uracil = 6,7-dimethyl-8-(1-D-ribityl)lumazine + phosphate + 2 H2O + H(+). The protein operates within cofactor biosynthesis; riboflavin biosynthesis; riboflavin from 2-hydroxy-3-oxobutyl phosphate and 5-amino-6-(D-ribitylamino)uracil: step 1/2. Catalyzes the formation of 6,7-dimethyl-8-ribityllumazine by condensation of 5-amino-6-(D-ribitylamino)uracil with 3,4-dihydroxy-2-butanone 4-phosphate. This is the penultimate step in the biosynthesis of riboflavin. The protein is 6,7-dimethyl-8-ribityllumazine synthase of Trichormus variabilis (strain ATCC 29413 / PCC 7937) (Anabaena variabilis).